We begin with the raw amino-acid sequence, 97 residues long: Mitochondrial import inner membrane translocase subunit Tim8 A (97 aa).

The Twin CX3C motif signature appears at 43–66 (CWEKCMDKPGPKLDSRAEACFVNC). Disulfide bonds link C43–C66 and C47–C62. 4 positions are modified to phosphoserine: S57, S87, S94, and S96.

Belongs to the small Tim family. In terms of assembly, heterohexamer; composed of 3 copies of TIMM8A and 3 copies of TIMM13, named soluble 70 kDa complex. Associates with the TIM22 complex, whose core is composed of TIMM22.

It is found in the mitochondrion inner membrane. Its function is as follows. Mitochondrial intermembrane chaperone that participates in the import and insertion of some multi-pass transmembrane proteins into the mitochondrial inner membrane. Also required for the transfer of beta-barrel precursors from the TOM complex to the sorting and assembly machinery (SAM complex) of the outer membrane. Acts as a chaperone-like protein that protects the hydrophobic precursors from aggregation and guide them through the mitochondrial intermembrane space. The TIMM8-TIMM13 complex mediates the import of proteins such as TIMM23, SLC25A12/ARALAR1 and SLC25A13/ARALAR2, while the predominant TIMM9-TIMM10 70 kDa complex mediates the import of much more proteins. The protein is Mitochondrial import inner membrane translocase subunit Tim8 A (Timm8a) of Rattus norvegicus (Rat).